Reading from the N-terminus, the 740-residue chain is Catalase-peroxidase (740 aa).

Positions M1–A27 are cleaved as a signal peptide. Positions W106–Y228 form a cross-link, tryptophyl-tyrosyl-methioninium (Trp-Tyr) (with M-254). Residue H107 is the Proton acceptor of the active site. Positions Y228 to M254 form a cross-link, tryptophyl-tyrosyl-methioninium (Tyr-Met) (with W-106). Residue H269 coordinates heme b.

Belongs to the peroxidase family. Peroxidase/catalase subfamily. In terms of assembly, homodimer or homotetramer. The cofactor is heme b. Formation of the three residue Trp-Tyr-Met cross-link is important for the catalase, but not the peroxidase activity of the enzyme.

The catalysed reaction is H2O2 + AH2 = A + 2 H2O. It carries out the reaction 2 H2O2 = O2 + 2 H2O. Functionally, bifunctional enzyme with both catalase and broad-spectrum peroxidase activity. In Colwellia psychrerythraea (strain 34H / ATCC BAA-681) (Vibrio psychroerythus), this protein is Catalase-peroxidase.